The sequence spans 603 residues: Elongation factor 4 (603 aa).

Residues 7–189 enclose the tr-type G domain; it reads SRLRNFCIIA…AVVDRIPSPK (183 aa). Residues 19–24 and 136–139 contribute to the GTP site; these read DHGKST and NKVD.

This sequence belongs to the TRAFAC class translation factor GTPase superfamily. Classic translation factor GTPase family. LepA subfamily.

It localises to the cell inner membrane. It catalyses the reaction GTP + H2O = GDP + phosphate + H(+). Required for accurate and efficient protein synthesis under certain stress conditions. May act as a fidelity factor of the translation reaction, by catalyzing a one-codon backward translocation of tRNAs on improperly translocated ribosomes. Back-translocation proceeds from a post-translocation (POST) complex to a pre-translocation (PRE) complex, thus giving elongation factor G a second chance to translocate the tRNAs correctly. Binds to ribosomes in a GTP-dependent manner. The chain is Elongation factor 4 from Prochlorococcus marinus (strain NATL1A).